The primary structure comprises 77 residues: Liver-expressed antimicrobial peptide 2 (77 aa).

Positions 1–22 (MWHLKLFAVLVICLLLAVQVHG) are cleaved as a signal peptide. A propeptide spanning residues 23–37 (SPIPELSSAKRRPRR) is cleaved from the precursor. Disulfide bonds link Cys54–Cys65 and Cys60–Cys70.

This sequence belongs to the LEAP2 family.

The protein resides in the secreted. Functionally, has an antimicrobial activity. This chain is Liver-expressed antimicrobial peptide 2 (LEAP2), found in Sus scrofa (Pig).